The primary structure comprises 660 residues: MRLPAGRHIRSIDAPIVPQSGRADTLDTLANRRLAGPDQEIPISSFADKTFTAPAQIRNFCIIAHIDHGKSTLADRMLQLTGVVDERSMRAQYLDRMDIERERGITIKAQNVRLPWQVSGGEDAGKEFVLHLIDTPGHVDFTYEVSRALEACEGAVLLVDAAQGIEAQTLANLYLALDRDLTIIPVLNKIDLPAADPDRYAGELAHIIGCEPDDVLWVSGKTGEGVARLLDEVVRQVPPPQGQADAPLRAMIFDSVYDIYRGVVTYVRVVDGKITPRERIAMMSTGATHELLEVGIVSPEPKASDGLGVGEVGYLITGVKDVRQSKVGDTVTSARHGAQEALTGYREPKPMVYSGLYPVDGSDYPDLRDALDRLRLNDAALTYEPETSVALGCGFRCGFLGLLHMEITRERLEREFDLDLISTSPNVVYRVIKEDGTEIVVTNPSDWPEGKVRTVYEPVVKTTIIAPSEFIGTIMELCQSRRGELGGMDYLSPERVELRYTMPLGEIIFDFFDSLKSRTRGYASLDYEEAGEQEAQLVKVDILLQGEAVDAFSAIVHKDAAFAYGNKMTTKLKELIPRQQFEVPVQAAIGSKIIARENIRAIRKDVLSKCYGGDITRKRKLLEKQKEGKKRMKTIGRVDVPQEAFVAALSADAAGDKSKK.

Positions 55–241 (AQIRNFCIIA…EVVRQVPPPQ (187 aa)) constitute a tr-type G domain. Residues 67–72 (DHGKST) and 188–191 (NKID) contribute to the GTP site.

Belongs to the TRAFAC class translation factor GTPase superfamily. Classic translation factor GTPase family. LepA subfamily.

The protein localises to the cell membrane. It catalyses the reaction GTP + H2O = GDP + phosphate + H(+). Required for accurate and efficient protein synthesis under certain stress conditions. May act as a fidelity factor of the translation reaction, by catalyzing a one-codon backward translocation of tRNAs on improperly translocated ribosomes. Back-translocation proceeds from a post-translocation (POST) complex to a pre-translocation (PRE) complex, thus giving elongation factor G a second chance to translocate the tRNAs correctly. Binds to ribosomes in a GTP-dependent manner. The polypeptide is Elongation factor 4 (Mycolicibacterium paratuberculosis (strain ATCC BAA-968 / K-10) (Mycobacterium paratuberculosis)).